We begin with the raw amino-acid sequence, 166 residues long: MQKEIFIAGGCFWGVERYFQKVKGVLDTKACYINGGFEGVKYKEVCEGSSHVEAVRVIYDNSKITEEDLWKLYLRIINPYSLNKQGNDRGVQYRIGLYSYDKDLLKKFSDLNEAFMKSEGKKNYIEIQKVEDVTLAEEYHQNYLLKNVNGYCHINLDDIPEEYQKQ.

Cys11 is a catalytic residue.

The protein belongs to the MsrA Met sulfoxide reductase family.

The catalysed reaction is L-methionyl-[protein] + [thioredoxin]-disulfide + H2O = L-methionyl-(S)-S-oxide-[protein] + [thioredoxin]-dithiol. The enzyme catalyses [thioredoxin]-disulfide + L-methionine + H2O = L-methionine (S)-S-oxide + [thioredoxin]-dithiol. In terms of biological role, has an important function as a repair enzyme for proteins that have been inactivated by oxidation. Catalyzes the reversible oxidation-reduction of methionine sulfoxide in proteins to methionine. This is Peptide methionine sulfoxide reductase MsrA from Mycoplasmopsis pulmonis (strain UAB CTIP) (Mycoplasma pulmonis).